A 594-amino-acid polypeptide reads, in one-letter code: Adenine deaminase 1 (594 aa).

This sequence belongs to the metallo-dependent hydrolases superfamily. Adenine deaminase family. Requires Mn(2+) as cofactor.

The enzyme catalyses adenine + H2O + H(+) = hypoxanthine + NH4(+). The polypeptide is Adenine deaminase 1 (Jannaschia sp. (strain CCS1)).